The chain runs to 405 residues: Neisseria adhesin A (405 aa).

The signal sequence occupies residues 1 to 23 (MKHFPSKVLTTAILATFCSGALA). The tract at residues 24 to 87 (ATNDDDVKKA…ADDFKGLGLK (64 aa)) is head domain. 2 coiled-coil regions span residues 87–170 (KKVV…KLEA) and 181–329 (AFND…LRKE). The interval 88–350 (KVVTNLTKTV…SGLFQPYNVG (263 aa)) is coiled stalk domain. The tract at residues 312-350 (HDTRLNGLDKTVSDLRKETRQGLAEQAALSGLFQPYNVG) is outer membrane translocation of the passenger domain. 4 beta stranded membrane-spanning segments follow: residues 350-360 (GRFNVTAAVGG), 364-375 (ESAVAIGTGFRF), 382-388 (KAGVAVG), and 394-405 (SAAYHVGVNYEW). The translocator domain stretch occupies residues 351 to 405 (RFNVTAAVGGYKSESAVAIGTGFRFTENFAAKAGVAVGTSSGSSAAYHVGVNYEW).

It belongs to the autotransporter-2 (AT-2) (TC 1.B.40) family. The non-membrane anchored protein (residues 24-350) probably forms a homotrimer; it is assumed the mature protein forms trimers in situ. The mature protein without the membrane-targeting segment (residues 24-350) binds to human heat shock 90 beta protein (HSP90AB1) both in vitro and when incubated with human monocytes. A subsequent paper showed binding of the same fragment in epithelial cells to both HSP90AA1 and HSP90AB1; in vitro the interaction is stabilized by ADP and the Hsp90 inhibitor 17-AAG (17-N-allylamino-17-demethoxygeldanamycin), in vitro and in vivo both interactions are inhibited by ATP. Binds human oxidized low-density lipoprotein receptor 1 (LOX-1, OLR1) in protein microarrays, in solution and when LOX-1 is expressed on the cell surface. Binds via the head and the beginning of the coiled stalk (residues 24-170); binding can be abrogated by monoclonal antibodies against those specific regions of NadA. Other potential binding partners were identified but not characterized in the same study. Forms high molecular weight oligomers in whole cell extracts that are not disrupted by boiling in SDS buffer.

The protein resides in the cell outer membrane. Its subcellular location is the cell surface. Functionally, adheres to and induces bacterial uptake by human epithelial cells in a microfilament-dependent process. Binding is reduced by pronase treatment, suggesting there is a protein receptor on the human cells. Possible human protein receptors include integrin beta-1 (ITGB1) and oxidized low-density lipoprotein receptor 1 (OLR1). Binds to extracellular human Hsp90 (preferentially the beta isoform, HSP90AB1) on monocytes, binding stimulates monocytes in a TLR4-dependent fashion, polymixin B, which binds NadA, blocks the activation. Hsp90 is probably not the first receptor on human monocytes. Non-membrane anchored protein (residues 24-350) is internalized into human epithelial cells by hijacking the endosome recycling pathway and may be recycled back to the cell surface, which might aid transcellular trafficking of the bacteria. A bacterial cell surface protein; antisera against this protein induce complement-mediated killing of this and other strains. This is Neisseria adhesin A from Neisseria meningitidis serogroup B.